Here is a 1090-residue protein sequence, read N- to C-terminus: Neurofilament heavy polypeptide (1090 aa).

Residues 2-98 (MSFGSADALL…AVAARSEKEQ (97 aa)) form a head region. Phosphoserine is present on residues Ser74 and Ser122. Positions 95–411 (EKEQLQALND…KLLEGEECRI (317 aa)) constitute an IF rod domain. The coil 1A stretch occupies residues 99–130 (LQALNDRFAGYIDKVRQLEAHNRSLEGEAAAL). Residues 131 to 143 (RQQQAGRAAMGEL) form a linker 1 region. The tract at residues 144 to 242 (YEREVREMRG…QEEVGELLGQ (99 aa)) is coil 1B. Positions 243 to 264 (IQGCGAAQAQAQAEARDALKCD) are linker 12. Residues 265–286 (VTSALREIRAQLEGHAVQSTLQ) form a coil 2A region. The segment at 287-290 (SEEW) is linker 2. The interval 291 to 411 (FRVRLDRLSE…KLLEGEECRI (121 aa)) is coil 2B. Ser345, Ser416, and Ser419 each carry phosphoserine. Residues 412–1090 (GFGPSPFSLT…TEDKATKGEK (679 aa)) are tail. Positions 456 to 1090 (EGQTEEIRVT…TEDKATKGEK (635 aa)) are disordered. The span at 468-495 (VTEEEDKEAQGQEGEEAEEGEEKEEEEG) shows a compositional bias: acidic residues. Positions 496–506 (AAATSPPAEEA) are enriched in low complexity. Phosphoserine occurs at positions 508, 523, 529, 535, 541, 547, 553, 559, 565, 571, 577, 583, 589, 595, 601, 607, 613, 619, 625, 631, 637, 643, 649, 655, 661, 667, 673, 679, 685, 691, 697, 703, 709, 715, 721, 727, 733, 739, 745, 751, 757, 763, and 769. Positions 508–579 (SPEKETKSRV…KSPAEAKSPA (72 aa)) are enriched in basic and acidic residues. Tandem repeats lie at residues 522–527 (KSPGEA), 528–533 (KSPGEA), 534–539 (KSPAEA), 540–545 (KSPGEA), 546–551 (KSPGEA), 552–557 (KSPGEA), 558–563 (KSPAEP), 564–569 (KSPAEP), 570–575 (KSPAEA), 576–581 (KSPAEP), 582–587 (KSPATV), 588–593 (KSPGEA), 594–599 (KSPSEA), 600–605 (KSPAEA), 606–611 (KSPAEA), 612–617 (KSPAEA), 618–623 (KSPAEA), 624–629 (KSPAEA), 630–635 (KSPAEA), 636–641 (KSPATV), 642–647 (KSPGEA), 648–653 (KSPSEA), 654–659 (KSPAEA), 660–665 (KSPAEA), 666–671 (KSPAEA), 672–677 (KSPAEV), 678–683 (KSPGEA), 684–689 (KSPAEP), 690–695 (KSPAEA), 696–701 (KSPAEV), 702–707 (KSPAEA), 708–713 (KSPAEV), 714–719 (KSPGEA), 720–725 (KSPAAV), 726–731 (KSPAEA), 732–737 (KSPAAV), 738–743 (KSPGEA), 744–749 (KSPGEA), 750–755 (KSPAEA), 756–761 (KSPAEA), 762–767 (KSPIEV), and 768–773 (KSPEKA). A 52 X 6 AA approximate tandem repeats of K-S-P-[AGISV]-[EATK]-[APVQ] region spans residues 522 to 892 (KSPGEAKSPG…KEEVKSPVKE (371 aa)). Residues 595–633 (SPSEAKSPAEAKSPAEAKSPAEAKSPAEAKSPAEAKSPA) show a composition bias toward basic and acidic residues. Residues 649-717 (SPSEAKSPAE…KSPAEVKSPG (69 aa)) are compositionally biased toward basic and acidic residues. A compositionally biased stretch (basic and acidic residues) spans 745 to 781 (SPGEAKSPAEAKSPAEAKSPIEVKSPEKAKTPVKEGA). The stretch at 774–779 (KTPVKE) is one 43; approximate repeat. 6 repeat units span residues 782 to 787 (KSPAEA), 788 to 793 (KSPEKA), 794 to 799 (KSPVKE), 808 to 813 (KSPEKA), 814 to 819 (KSPVKE), and 833 to 838 (KSPEAQ). Phosphoserine is present on residues Ser783, Ser789, Ser795, Ser809, Ser815, and Ser834. The segment covering 788–834 (KSPEKAKSPVKEDIKPPAEAKSPEKAKSPVKEGAKPPEKAKPLDVKS) has biased composition (basic and acidic residues). Residue Thr839 is modified to Phosphothreonine. Composition is skewed to basic and acidic residues over residues 843-964 (EEAK…KAVA) and 974-1090 (GVKE…KGEK). 3 tandem repeats follow at residues 858-863 (KSPAKE), 866-871 (KSPEKE), and 887-892 (KSPVKE). Phosphoserine occurs at positions 859, 867, 888, and 947.

The protein belongs to the intermediate filament family. Forms heterodimers with NEFL; which can further hetero-oligomerize (in vitro). Forms heterodimers with INA (in vitro). Post-translationally, there are a number of repeats of the tripeptide K-S-P, NFH is phosphorylated on a number of the serines in this motif. It is thought that phosphorylation of NFH results in the formation of interfilament cross bridges that are important in the maintenance of axonal caliber. In terms of processing, phosphorylation seems to play a major role in the functioning of the larger neurofilament polypeptides (NF-M and NF-H), the levels of phosphorylation being altered developmentally and coincidentally with a change in the neurofilament function. Phosphorylated in the head and rod regions by the PKC kinase PKN1, leading to the inhibition of polymerization. As to expression, expressed in the sciatic nerve (at protein level).

The protein resides in the cytoplasm. Its subcellular location is the cytoskeleton. It is found in the cell projection. It localises to the axon. Functionally, neurofilaments usually contain three intermediate filament proteins: NEFL, NEFM, and NEFH which are involved in the maintenance of neuronal caliber. NEFH has an important function in mature axons that is not subserved by the two smaller NF proteins. May additionally cooperate with the neuronal intermediate filament proteins PRPH and INA to form neuronal filamentous networks. The chain is Neurofilament heavy polypeptide (Nefh) from Mus musculus (Mouse).